The sequence spans 164 residues: UPF0114 protein YqhA (164 aa).

3 helical membrane-spanning segments follow: residues 10-32 (YASR…ALAL), 53-75 (LILV…MVMF), and 136-155 (LMWY…VMGY).

Belongs to the UPF0114 family.

The protein localises to the cell membrane. This is UPF0114 protein YqhA from Shigella flexneri.